A 993-amino-acid polypeptide reads, in one-letter code: DNA-binding protein SMUBP-2 (993 aa).

A2 carries the N-acetylalanine modification. ATP is bound by residues 213-220 (GPPGTGKT), Q402, Y441, and E570. The interval 637 to 783 (TAFEYLDDIV…KARHITVSRR (147 aa)) is SS DNA-binding. 3 disordered regions span residues 650-723 (YTHE…GPDR), 765-815 (LRHD…EPVT), and 837-872 (RQQS…KGPV). Polar residues-rich tracts occupy residues 667-683 (PSTS…SGQE) and 703-716 (HVQS…NGSD). An R3H domain is found at 721–784 (PDRTEHFRAT…ARHITVSRRS (64 aa)). Residues 765-775 (LRHDSTGEGKA) are compositionally biased toward basic and acidic residues. Over residues 784–794 (SPASSGSVAPQ) the composition is skewed to low complexity. Phosphoserine is present on residues S797 and S800. The segment covering 837 to 847 (RQQSSQAQTAK) has biased composition (polar residues). A Nuclear localization signal motif is present at residues 862 to 866 (KKKKK). Residues 889-938 (VKADNTCSFSKCSVSTTTLGQFCMHCSHRYYLSHHLPEIHGCGEKARAHA) form an AN1-type; degenerate zinc finger. Positions 911, 914, 928, and 930 each coordinate Zn(2+). The interval 953 to 993 (GTKDRALDPAKRAQLQRRLDKKLGELSSQRTSRKKEKERGT) is disordered. Over residues 954–976 (TKDRALDPAKRAQLQRRLDKKLG) the composition is skewed to basic and acidic residues.

It belongs to the DNA2/NAM7 helicase family. As to quaternary structure, homooligomer. Interacts with RUVBL1. Interacts with RUVBL2. Interacts with GTF3C1. Interacts with ABT1. Interacts with ribosomes. In terms of tissue distribution, in all tissues examined.

Its subcellular location is the nucleus. It is found in the cytoplasm. The protein resides in the cell projection. It localises to the axon. It carries out the reaction ATP + H2O = ADP + phosphate + H(+). In terms of biological role, 5' to 3' helicase that unwinds RNA and DNA duplexes in an ATP-dependent reaction. Specific to 5'-phosphorylated single-stranded guanine-rich sequences. May play a role in RNA metabolism, ribosome biogenesis or initiation of translation. May play a role in regulation of transcription. Interacts with tRNA-Tyr. This is DNA-binding protein SMUBP-2 (Ighmbp2) from Mus musculus (Mouse).